Here is a 443-residue protein sequence, read N- to C-terminus: tRNA modification GTPase MnmE (443 aa).

The (6S)-5-formyl-5,6,7,8-tetrahydrofolate site is built by R23, E82, and K121. The 150-residue stretch at 215 to 364 (GTSIVLAGHP…LKQFIQKWIQ (150 aa)) folds into the TrmE-type G domain. N225 lines the K(+) pocket. GTP is bound by residues 225–230 (NAGKSS), 244–250 (TDIPGTT), and 269–272 (DSAG). S229 contributes to the Mg(2+) binding site. Residues T244, I246, and T249 each contribute to the K(+) site. Mg(2+) is bound at residue T250. Position 443 (K443) interacts with (6S)-5-formyl-5,6,7,8-tetrahydrofolate.

It belongs to the TRAFAC class TrmE-Era-EngA-EngB-Septin-like GTPase superfamily. TrmE GTPase family. As to quaternary structure, homodimer. Heterotetramer of two MnmE and two MnmG subunits. The cofactor is K(+).

Its subcellular location is the cytoplasm. In terms of biological role, exhibits a very high intrinsic GTPase hydrolysis rate. Involved in the addition of a carboxymethylaminomethyl (cmnm) group at the wobble position (U34) of certain tRNAs, forming tRNA-cmnm(5)s(2)U34. The polypeptide is tRNA modification GTPase MnmE (Chlamydia felis (strain Fe/C-56) (Chlamydophila felis)).